The primary structure comprises 374 residues: Double homeobox protein 4C (374 aa).

The segment covering 1-10 (MALPTPSDST) has biased composition (polar residues). 3 disordered regions span residues 1-24 (MALP…RRRL), 72-102 (SRQL…TAVT), and 218-374 (LQPS…YELL). DNA-binding regions (homeobox) lie at residues 19-78 (GRRR…LRQH) and 94-153 (GRRK…PGQG). Over residues 265-274 (KSREDRDPQR) the composition is skewed to basic and acidic residues. Composition is skewed to low complexity over residues 278–302 (PGPC…LAPP) and 319–329 (AGAAWEPQAGA). Positions 354–374 (QPLQEPGRSSTVTSSLLYELL) are enriched in polar residues.

As to quaternary structure, may interact with MYF5; regulates MYF5 expression. In terms of tissue distribution, expressed in muscles, as well as in primary myoblasts and myotubes (at protein level).

The protein resides in the nucleus. It is found in the cytoplasm. Functionally, down-regulates MYOD1 expression and may up-regulate MYF5 expression. May regulate microRNA (miRNA) transcription, up-regulating the expression of some myogenic miRNAs, including MIR1-1, MIR133A2, MIR133B and MIR206. Impairs the differentiation of myoblasts and may be involved in muscle regeneration. Reduces DUX4-induced nuclear localization of CTNNB1/beta-catenin and its subsequent activation of target genes. In Homo sapiens (Human), this protein is Double homeobox protein 4C (DUX4L9).